Consider the following 572-residue polypeptide: Urease subunit alpha (572 aa).

One can recognise a Urease domain in the interval 136–572 (GGIDTHIHFI…VPLGQRYFLF (437 aa)). Ni(2+)-binding residues include histidine 141, histidine 143, and lysine 224. Position 224 is an N6-carboxylysine (lysine 224). Histidine 226 provides a ligand contact to substrate. Ni(2+)-binding residues include histidine 253 and histidine 279. Histidine 327 functions as the Proton donor in the catalytic mechanism. Position 367 (aspartate 367) interacts with Ni(2+).

This sequence belongs to the metallo-dependent hydrolases superfamily. Urease alpha subunit family. Heterotrimer of UreA (gamma), UreB (beta) and UreC (alpha) subunits. Three heterotrimers associate to form the active enzyme. It depends on Ni cation as a cofactor. In terms of processing, carboxylation allows a single lysine to coordinate two nickel ions.

The protein localises to the cytoplasm. The enzyme catalyses urea + 2 H2O + H(+) = hydrogencarbonate + 2 NH4(+). It participates in nitrogen metabolism; urea degradation; CO(2) and NH(3) from urea (urease route): step 1/1. This Haemophilus influenzae (strain PittGG) protein is Urease subunit alpha.